A 371-amino-acid polypeptide reads, in one-letter code: Probable beta-1,3-galactosyltransferase 12 (371 aa).

The tract at residues 1 to 36 (MPLFSHRFTTASSSSPASPSYYNKPSSKTHKPNSSS) is disordered. Positions 11–36 (ASSSSPASPSYYNKPSSKTHKPNSSS) are enriched in low complexity. A helical; Signal-anchor for type II membrane protein membrane pass occupies residues 46–66 (VAIIFFSLVSVFIGVAGTIFA). Asparagine 291 is a glycosylation site (N-linked (GlcNAc...) asparagine).

It belongs to the glycosyltransferase 31 family. It depends on Mn(2+) as a cofactor.

It localises to the golgi apparatus membrane. It participates in protein modification; protein glycosylation. Beta-1,3-galactosyltransferase that transfers galactose from UDP-galactose to substrates with a terminal glycosyl residue. The protein is Probable beta-1,3-galactosyltransferase 12 (B3GALT12) of Arabidopsis thaliana (Mouse-ear cress).